Here is a 965-residue protein sequence, read N- to C-terminus: Fibronectin-binding protein A (965 aa).

The N-terminal stretch at 1-36 (MKNNLRYGIRKHKLGAASVFLGTMIVIGMGQDKEAA) is a signal peptide. The YSIRK-G/S signaling motif motif lies at 7-18 (YGIRKHKLGAAS). The tract at residues 37–206 (ASEQKTTTVE…VTSKVTVEDE (170 aa)) is disordered. A ligand-binding A region region spans residues 37 to 514 (ASEQKTTTVE…SNKANGDGKY (478 aa)). The span at 39-55 (EQKTTTVEENGNSATDN) shows a compositional bias: polar residues. Residues 59–74 (ETQTTTTNVNTIDETQ) are compositionally biased toward low complexity. Residues 75-92 (SYSATATEQPSNATQVTT) show a composition bias toward polar residues. Residues 112–122 (TVKEEVVKEEA) show a composition bias toward basic and acidic residues. The segment covering 126–139 (VKETTQSQDNSGDQ) has biased composition (polar residues). The span at 179–193 (DVAEAKEASDAKVET) shows a compositional bias: basic and acidic residues. Residues 194–514 (GTDVTSKVTV…SNKANGDGKY (321 aa)) are fibrinogen/elastin/tropoelastin-binding. A fibronectin-binding region spans residues 515-837 (GPIVDSNNFE…EGQQTIEEDT (323 aa)). A B-1 repeat occupies 548-577 (ENQDNTPLDIDYHTAIDGEGGYVDGYIETI). The interval 548-607 (ENQDNTPLDIDYHTAIDGEGGYVDGYIETIEETDSSAIDIDYHTAVDSEAGHVGGYTESS) is 2 X approximate tandem repeats. The B-2 repeat unit spans residues 578 to 607 (EETDSSAIDIDYHTAVDSEAGHVGGYTESS). Disordered regions lie at residues 598-625 (GHVG…NSKH), 743-774 (LGYE…GNII), 794-903 (IEED…GKVV), and 916-942 (VAPT…NKGM). The D-1; truncated repeat unit spans residues 748–770 (GQNSGNQSFEEDTEEDKPKYEQG). The interval 748–839 (GQNSGNQSFE…QQTIEEDTTP (92 aa)) is 4 X approximate tandem repeats. The D-2; truncated repeat unit spans residues 771 to 785 (GNIIDIDFDSVPQIH). The stretch at 786–824 (GFNKHNEIIEEDTNKDKPNYQFGGHNSVDFEEDTLPKVS) is one D-3 repeat. Positions 794–803 (IEEDTNKDKP) are enriched in basic and acidic residues. A D-4; truncated repeat occupies 825–839 (GQNEGQQTIEEDTTP). Residues 839-885 (PPTPPTPEVPSEPGTPTPPTPEVPSEPGKPTPPTPEVPAEPGKPVPP) are compositionally biased toward pro residues. 4 WR repeats span residues 840 to 853 (PTPP…EPGT), 854 to 867 (PTPP…EPGK), 868 to 881 (PTPP…EPGK), and 882 to 895 (PVPP…KPSK). The tract at residues 840–895 (PTPPTPEVPSEPGTPTPPTPEVPSEPGKPTPPTPEVPAEPGKPVPPAKEEPKKPSK) is 4 X tandem repeats, Pro-rich (WR). An LPXTG sorting signal motif is present at residues 929-933 (LPETG). Thr-932 carries the pentaglycyl murein peptidoglycan amidated threonine modification. Residues 933-965 (GGEESTNKGMLFGGLFSILGLALLRRNKKNHKA) constitute a propeptide, removed by sortase.

The protein localises to the secreted. It is found in the cell wall. Functionally, promotes bacterial attachment to multiple substrates, such as fibronectin (Fn), fibrinogen (Fg), elastin peptides and tropoelastin. This confers to S.aureus the ability to invade endothelial cells. Promotes adherence to and aggregation of activated platelets. This is Fibronectin-binding protein A (fnbA) from Staphylococcus aureus (strain MRSA252).